The following is a 246-amino-acid chain: Probable transcriptional regulatory protein WRi_002620 (246 aa).

A disordered region spans residues 1–22 (MAGHSQFSNIKHRKGAQDAKRS).

It belongs to the TACO1 family.

It localises to the cytoplasm. This Wolbachia sp. subsp. Drosophila simulans (strain wRi) protein is Probable transcriptional regulatory protein WRi_002620.